An 84-amino-acid chain; its full sequence is Exendin-2-long (84 aa).

A signal peptide spans 1-23 (MKSILWLCVFGLLIATLFPVSWQ). The propeptide occupies 24–44 (MAIKSRLSSEDSETDQRLFES).

Belongs to the glucagon family. In terms of processing, an amidated Pro-81 is described. Such an amidation is however not compatible with the sequence displayed. Indeed cDNAs do not encode a Gly that could serve as substrate for peptide alpha-amidation. Expressed by the venom gland. Not expressed in the pancreas, liver, stomach, small intestine, lung, heart, kidney, spleen, ovary, and brain.

The protein localises to the secreted. Its function is as follows. Has vasoactive intestinal peptide(VIP)/secretin-like biological activity. Interacts with rat and human VIP receptors 1 (VIPR1) and 2 (VIPR2), with the highest affinity for the human VIPR2. Induces hypotension that is mediated by relaxation of cardiac smooth muscle. This vasodilation may not be transduced by VIP or PACAP receptors. The chain is Exendin-2-long from Heloderma suspectum (Gila monster).